The chain runs to 218 residues: 5-oxoprolinase subunit B (218 aa).

This sequence belongs to the PxpB family. As to quaternary structure, forms a complex composed of PxpA, PxpB and PxpC.

The catalysed reaction is 5-oxo-L-proline + ATP + 2 H2O = L-glutamate + ADP + phosphate + H(+). Functionally, catalyzes the cleavage of 5-oxoproline to form L-glutamate coupled to the hydrolysis of ATP to ADP and inorganic phosphate. In Escherichia coli O157:H7, this protein is 5-oxoprolinase subunit B.